We begin with the raw amino-acid sequence, 292 residues long: Ornithine decarboxylase antizyme (292 aa).

The protein belongs to the ODC antizyme family. In terms of assembly, interacts with ODC/SPE1 and thereby sterically blocks ODC homodimerization.

Functionally, ornithine decarboxylase (ODC) antizyme protein that negatively regulates ODC activity and intracellular polyamine biosynthesis in response to increased intracellular polyamine levels. Binds to ODC/SPE1 monomers, inhibiting the assembly of the functional ODC homodimer, and targets the monomers for ubiquitin-independent proteolytic destruction by the 26S proteasome. The chain is Ornithine decarboxylase antizyme (OAZ1) from Saccharomyces cerevisiae (strain ATCC 204508 / S288c) (Baker's yeast).